We begin with the raw amino-acid sequence, 151 residues long: Probable cGMP 3',5'-cyclic phosphodiesterase subunit delta (151 aa).

The protein belongs to the PDE6D/unc-119 family. As to quaternary structure, interacts with Pde6.

It localises to the nucleus. The protein resides in the cytoplasm. The polypeptide is Probable cGMP 3',5'-cyclic phosphodiesterase subunit delta (Drosophila willistoni (Fruit fly)).